The following is a 209-amino-acid chain: Protease (209 aa).

Residues His55, Asp72, and Cys123 contribute to the active site.

This sequence belongs to the peptidase C5 family. As to quaternary structure, interacts with protease cofactor pVI-C; this interaction is necessary for protease activation.

It is found in the virion. The protein localises to the host nucleus. The catalysed reaction is Cleaves proteins of the adenovirus and its host cell at two consensus sites: -Yaa-Xaa-Gly-Gly-|-Xaa- and -Yaa-Xaa-Gly-Xaa-|-Gly- (in which Yaa is Met, Ile or Leu, and Xaa is any amino acid).. Requires DNA and protease cofactor for maximal activation. Inside nascent virions, becomes partially activated by binding to the viral DNA, allowing it to cleave the cofactor that binds to the protease and fully activates it. Actin, like the viral protease cofactor, seems to act as a cofactor in the cleavage of cytokeratin 18 and of actin itself. In terms of biological role, cleaves viral precursor proteins (pTP, pIIIa, pVI, pVII, pVIII, and pX) inside newly assembled particles giving rise to mature virions. Protease complexed to its cofactor slides along the viral DNA to specifically locate and cleave the viral precursors. Mature virions have a weakened organization compared to the unmature virions, thereby facilitating subsequent uncoating. Without maturation, the particle lacks infectivity and is unable to uncoat. Late in adenovirus infection, in the cytoplasm, may participate in the cytoskeleton destruction. Cleaves host cell cytoskeletal keratins K7 and K18. The protein is Protease of Human adenovirus D serotype 17 (HAdV-17).